The following is a 438-amino-acid chain: Serine hydroxymethyltransferase (438 aa).

(6S)-5,6,7,8-tetrahydrofolate contacts are provided by residues Leu133 and 137–139 (GHL). N6-(pyridoxal phosphate)lysine is present on Lys242.

Belongs to the SHMT family. In terms of assembly, homodimer. Requires pyridoxal 5'-phosphate as cofactor.

The protein resides in the cytoplasm. It carries out the reaction (6R)-5,10-methylene-5,6,7,8-tetrahydrofolate + glycine + H2O = (6S)-5,6,7,8-tetrahydrofolate + L-serine. It functions in the pathway one-carbon metabolism; tetrahydrofolate interconversion. It participates in amino-acid biosynthesis; glycine biosynthesis; glycine from L-serine: step 1/1. Catalyzes the reversible interconversion of serine and glycine with tetrahydrofolate (THF) serving as the one-carbon carrier. This reaction serves as the major source of one-carbon groups required for the biosynthesis of purines, thymidylate, methionine, and other important biomolecules. Also exhibits THF-independent aldolase activity toward beta-hydroxyamino acids, producing glycine and aldehydes, via a retro-aldol mechanism. The chain is Serine hydroxymethyltransferase from Brucella abortus (strain S19).